A 145-amino-acid chain; its full sequence is Procyclic form-specific polypeptide B-alpha (145 aa).

The first 27 residues, 1–27 (MAPRSLYLLAVLLFSANLFAGVGFAAA), serve as a signal peptide directing secretion. Positions 28-127 (AEGPEDKGLT…PEPEPGAATL (100 aa)) are disordered. A compositionally biased stretch (basic and acidic residues) spans 31–52 (PEDKGLTKGGKGKGEKGTKVGA). 32 repeat units span residues 59–60 (DP), 61–62 (DP), 63–64 (EP), 65–66 (EP), 67–68 (EP), 69–70 (EP), 71–72 (EP), 73–74 (EP), 75–76 (EP), 77–78 (EP), 79–80 (EP), 81–82 (EP), 83–84 (EP), 85–86 (EP), 87–88 (EP), 89–90 (EP), 91–92 (EP), 93–94 (EP), 95–96 (EP), 97–98 (EP), 99–100 (EP), 101–102 (EP), 103–104 (EP), 105–106 (EP), 107–108 (EP), 109–110 (EP), 111–112 (EP), 113–114 (EP), 115–116 (EP), 117–118 (EP), 119–120 (EP), and 121–122 (EP). The segment at 59–122 (DPDPEPEPEP…EPEPEPEPEP (64 aa)) is 32 X 2 AA tandem repeats of [DE]-P. Residues 60-120 (PDPEPEPEPE…EPEPEPEPEP (61 aa)) show a composition bias toward acidic residues. The GPI-anchor amidated glycine moiety is linked to residue Gly123. Residues 124-145 (AATLKSVALPFAIAAAALVAAF) constitute a propeptide that is removed on maturation.

The protein resides in the cell membrane. Major surface antigen of procyclic forms. The sequence is that of Procyclic form-specific polypeptide B-alpha (PARPB) from Trypanosoma brucei brucei.